The chain runs to 383 residues: Probable L-tyrosine/L-aspartate decarboxylase (383 aa).

The residue at position 227 (lysine 227) is an N6-(pyridoxal phosphate)lysine.

It belongs to the group II decarboxylase family. MfnA subfamily. Pyridoxal 5'-phosphate is required as a cofactor.

It catalyses the reaction L-tyrosine + H(+) = tyramine + CO2. The enzyme catalyses L-aspartate + H(+) = beta-alanine + CO2. It functions in the pathway cofactor biosynthesis; methanofuran biosynthesis. The protein operates within cofactor biosynthesis; coenzyme A biosynthesis. In terms of biological role, catalyzes the decarboxylation of L-tyrosine to produce tyramine for methanofuran biosynthesis. Can also catalyze the decarboxylation of L-aspartate to produce beta-alanine for coenzyme A (CoA) biosynthesis. The chain is Probable L-tyrosine/L-aspartate decarboxylase from Methanothrix thermoacetophila (strain DSM 6194 / JCM 14653 / NBRC 101360 / PT) (Methanosaeta thermophila).